The sequence spans 152 residues: UPF0225 protein YchJ (152 aa).

This sequence belongs to the UPF0225 family.

This chain is UPF0225 protein YchJ, found in Shigella flexneri serotype 5b (strain 8401).